A 95-amino-acid polypeptide reads, in one-letter code: Small ubiquitin-related modifier 2-A (95 aa).

Lys11 participates in a covalent cross-link: Glycyl lysine isopeptide (Lys-Gly) (interchain with G-Cter in SUMO). The Ubiquitin-like domain maps to 16–95 (DHINLKVAGQ…VFQQQTGGSF (80 aa)). Gly93 is covalently cross-linked (Glycyl lysine isopeptide (Gly-Lys) (interchain with K-? in acceptor proteins)). Residues 94–95 (SF) constitute a propeptide that is removed on maturation.

This sequence belongs to the ubiquitin family. SUMO subfamily. In terms of assembly, interacts with sae2 and ube2i. Covalently attached to a number of proteins, including top2. Post-translationally, polymeric chains can be formed through Lys-11 cross-linking. Cleavage of precursor form by a sentrin-specific protease is necessary for function.

The protein resides in the nucleus. Functionally, ubiquitin-like protein that can be covalently attached to proteins as a monomer or as a lysine-linked polymer. Covalent attachment via an isopeptide bond to its substrates requires prior activation by the E1 complex sae1-sae2 and linkage to the E2 enzyme ube2i, and can be promoted by an E3 ligase such as pias1-4. This post-translational modification on lysine residues of proteins plays a crucial role in a number of cellular processes such as nuclear transport, DNA replication and repair, mitosis and signal transduction. Polymeric sumo2 chains are also susceptible to polyubiquitination which functions as a signal for proteasomal degradation of modified proteins. The polypeptide is Small ubiquitin-related modifier 2-A (sumo2-a) (Xenopus laevis (African clawed frog)).